The following is a 230-amino-acid chain: Urease accessory protein UreE (230 aa).

Basic residues predominate over residues histidine 200 to threonine 210. Positions histidine 200–histidine 230 are disordered. The span at histidine 211–histidine 230 shows a compositional bias: basic and acidic residues.

The protein belongs to the UreE family.

The protein localises to the cytoplasm. In terms of biological role, involved in urease metallocenter assembly. Binds nickel. Probably functions as a nickel donor during metallocenter assembly. This Yersinia enterocolitica serotype O:8 / biotype 1B (strain NCTC 13174 / 8081) protein is Urease accessory protein UreE.